Consider the following 573-residue polypeptide: Proline--tRNA ligase (573 aa).

The protein belongs to the class-II aminoacyl-tRNA synthetase family. ProS type 1 subfamily. As to quaternary structure, homodimer.

The protein localises to the cytoplasm. The enzyme catalyses tRNA(Pro) + L-proline + ATP = L-prolyl-tRNA(Pro) + AMP + diphosphate. Functionally, catalyzes the attachment of proline to tRNA(Pro) in a two-step reaction: proline is first activated by ATP to form Pro-AMP and then transferred to the acceptor end of tRNA(Pro). As ProRS can inadvertently accommodate and process non-cognate amino acids such as alanine and cysteine, to avoid such errors it has two additional distinct editing activities against alanine. One activity is designated as 'pretransfer' editing and involves the tRNA(Pro)-independent hydrolysis of activated Ala-AMP. The other activity is designated 'posttransfer' editing and involves deacylation of mischarged Ala-tRNA(Pro). The misacylated Cys-tRNA(Pro) is not edited by ProRS. The polypeptide is Proline--tRNA ligase (Methylobacillus flagellatus (strain ATCC 51484 / DSM 6875 / VKM B-1610 / KT)).